An 835-amino-acid chain; its full sequence is MIGILKKVFDVNQRQIKRMQKTVEQIDALESSIKPLTDEQLKGKTLEFKERLTKGETVDDLLPEAFAVVREAATRVLGMRPYGVQLMGGIALHEGNISEMKTGEGKTLTSTLPVYLNALTGKGVHVVTVNEYLAQRDANEMGQLHEFLGLTVGINLNSMSREEKQEAYAADITYSTNNELGFDYLRDNMVLYKEQCVQRPLHFAIIDEVDSILVDEARTPLIISGQAQKSTELYMFANAFVRTLENEKDYSFDVKTKNVMLTEDGITKAEKAFHIENLFDLKHVALLHHINQALRAHVVMHRDTDYVVQEGEIVIVDQFTGRLMKGRRYSEGLHQAIEAKEGVEIQNESMTLATITFQNYFRMYEKLSGMTGTAKTEEEEFRNIYNMNVIVIPTNKPIIRDDRADLIFKSMEGKFNAVVEDIVNRHKQGQPVLVGTVAIETSELISKMLTRKGVRHNILNAKNHAREADIIAEAGMKGAVTIATNMAGRGTDIKLGDDIKNIGLAVIGTERHESRRIDNQLRGRAGRQGDPGVTQFYLSMEDELMRRFGSDNMKAMMDRLGMDDSQPIESKMVSRAVESAQKRVEGNNYDARKQLLQYDDVLRQQREVIYKQRQEVMESENLRGIIEGMMKSTVERAVALHTQEEIEEDWNIKGLVDYLNTNLLQEGDVKEEELRRLAPEEMSEPIIAKLIERYNDKEKLMPEEQMREFEKVVVFRVVDTKWTEHIDAMDHLREGIHLRAYGQIDPLREYQMEGFAMFESMIASIEEEISRYIMKAEIEQNLERQEVVQGEAVHPSSDGEEAKKKPVVKGDQVGRNDLCKCGSGKKYKNCCGIGK.

ATP-binding positions include Q85, 103–107 (GEGKT), and D492. Residues 788-807 (VQGEAVHPSSDGEEAKKKPV) are disordered. C819, C821, C830, and C831 together coordinate Zn(2+).

It belongs to the SecA family. Monomer and homodimer. Part of the essential Sec protein translocation apparatus which comprises SecA, SecYEG and auxiliary proteins SecDF. Other proteins may also be involved. Zn(2+) is required as a cofactor.

It is found in the cell membrane. The protein resides in the cytoplasm. It catalyses the reaction ATP + H2O + cellular proteinSide 1 = ADP + phosphate + cellular proteinSide 2.. Its function is as follows. Part of the Sec protein translocase complex. Interacts with the SecYEG preprotein conducting channel. Has a central role in coupling the hydrolysis of ATP to the transfer of proteins into and across the cell membrane, serving as an ATP-driven molecular motor driving the stepwise translocation of polypeptide chains across the membrane. The sequence is that of Protein translocase subunit SecA 1 from Bacillus thuringiensis subsp. konkukian (strain 97-27).